The primary structure comprises 120 residues: Large ribosomal subunit protein bL20 (120 aa).

The protein belongs to the bacterial ribosomal protein bL20 family.

In terms of biological role, binds directly to 23S ribosomal RNA and is necessary for the in vitro assembly process of the 50S ribosomal subunit. It is not involved in the protein synthesizing functions of that subunit. The protein is Large ribosomal subunit protein bL20 of Methylobacillus flagellatus (strain ATCC 51484 / DSM 6875 / VKM B-1610 / KT).